The chain runs to 456 residues: Alcohol acyltransferase 16 (456 aa).

Catalysis depends on proton acceptor residues His167 and Asp382.

This sequence belongs to the plant acyltransferase family. In terms of tissue distribution, expressed in fruit.

It catalyses the reaction 3-(methylsulfanyl)propanoyl-CoA + butan-1-ol = butyl 3-(methylsulfanyl)propanoate + CoA. The enzyme catalyses ethanol + benzoyl-CoA = ethyl benzoate + CoA. The catalysed reaction is butan-1-ol + benzoyl-CoA = butyl benzoate + CoA. It carries out the reaction 2-(methylsulfanyl)acetyl-CoA + butan-1-ol = butyl 2-(methylsulfanyl)acetate + CoA. Its function is as follows. Involved in the biosynthesis of volatile esters which confer kiwifruit flavor. Alcohol acyl transferase that can use a wide range of alcohols as substrate to produce esters. Exhibits benzoyl-CoA:alcohol O-acyltransferase activity. This chain is Alcohol acyltransferase 16, found in Actinidia chinensis var. chinensis (Chinese soft-hair kiwi).